The primary structure comprises 254 residues: Leucyl/phenylalanyl-tRNA--protein transferase (254 aa).

It belongs to the L/F-transferase family.

The protein localises to the cytoplasm. It catalyses the reaction N-terminal L-lysyl-[protein] + L-leucyl-tRNA(Leu) = N-terminal L-leucyl-L-lysyl-[protein] + tRNA(Leu) + H(+). The enzyme catalyses N-terminal L-arginyl-[protein] + L-leucyl-tRNA(Leu) = N-terminal L-leucyl-L-arginyl-[protein] + tRNA(Leu) + H(+). The catalysed reaction is L-phenylalanyl-tRNA(Phe) + an N-terminal L-alpha-aminoacyl-[protein] = an N-terminal L-phenylalanyl-L-alpha-aminoacyl-[protein] + tRNA(Phe). Functionally, functions in the N-end rule pathway of protein degradation where it conjugates Leu, Phe and, less efficiently, Met from aminoacyl-tRNAs to the N-termini of proteins containing an N-terminal arginine or lysine. This is Leucyl/phenylalanyl-tRNA--protein transferase from Burkholderia vietnamiensis (strain G4 / LMG 22486) (Burkholderia cepacia (strain R1808)).